The following is a 391-amino-acid chain: F-box only protein 5 (391 aa).

In terms of domain architecture, F-box spans 198-245 (AELFHRDFKHLLTKILRHLSAMDLINVISVSTTWRKILQKDNSAYNSY). The ZBR-type zinc finger occupies 318-366 (CLKVCVDCSSPAKYDPYLHRATCTRESCKFDFCTLCSCKYHGSKCCQTS). Cysteine 322, cysteine 325, cysteine 340, cysteine 345, cysteine 350, cysteine 353, histidine 358, and cysteine 363 together coordinate Zn(2+). Positions 365-391 (TSKPRSYRVPSEPLPGSKKSKQNLRRL) are disordered. Positions 382–391 (KKSKQNLRRL) are enriched in basic residues.

Part of a SCF (SKP1-cullin-F-box) protein ligase complex. Interacts with btrc. Interacts with skp1. Interacts with cdc20. Interacts with pin1; stabilizes fbxo5 by preventing its association with btrc in an isomerization-dependent pathway; this interaction is present during G2 phase and prevents fbxo5 degradation. Interacts with plk1. Proteolysed; proteolysis is induced by both cyclin B-cdk1 and cyclin A-cdk1/2 complex through probable phosphorylation. Proteolysis is inhibited by pin1 during G2.

The protein localises to the nucleus. It localises to the cytoplasm. Its subcellular location is the cytoskeleton. The protein resides in the spindle. It is found in the microtubule organizing center. The protein localises to the centrosome. It participates in protein modification; protein ubiquitination. Functionally, regulates progression through early mitosis by inhibiting the anaphase promoting complex/cyclosome (APC). Binds to the APC activators cdc20 to prevent APC activation. Can also bind directly to the APC to inhibit substrate-binding. Required to arrest unfertilized eggs at metaphase of meiosis II, by preventing their release from metaphase of meiosis II, through inhibition of APC-dependent cyclin B destruction leading to stabilization of cyclin B-cdk1 complex activity. The polypeptide is F-box only protein 5 (Xenopus tropicalis (Western clawed frog)).